The chain runs to 61 residues: uncharacterized protein (61 aa).

At 1-20 (MSSTTSTINLSSLGSAINDV) the chain is on the extracellular side. Residues 21–41 (LNIIVQYLPVFVTVAVLFGII) traverse the membrane as a helical segment. Over 42-61 (TYMTGGLGGLFSGITGIFGS) the chain is Cytoplasmic.

It is found in the host membrane. This is an uncharacterized protein from Acidianus filamentous virus 2 (isolate Italy/Pozzuoli) (AFV-2).